Here is a 1085-residue protein sequence, read N- to C-terminus: Carbamoyl phosphate synthase large chain (1085 aa).

Positions 1 to 399 (MPKRTDISNI…ALQKALCSLE (399 aa)) are carboxyphosphate synthetic domain. Positions 127, 167, 174, 206, 208, 213, 239, 240, 241, 283, and 297 each coordinate ATP. One can recognise an ATP-grasp 1 domain in the interval 131–326 (KEAMLKIGMD…IAKVATMLAV (196 aa)). Mg(2+)-binding residues include glutamine 283, glutamate 297, and asparagine 299. Mn(2+)-binding residues include glutamine 283, glutamate 297, and asparagine 299. Positions 400–552 (NNWLGFESLS…APNPLPPIEN (153 aa)) are oligomerization domain. Residues 553 to 951 (KQEKKEKKIL…AFFKAQTACF (399 aa)) are carbamoyl phosphate synthetic domain. The 194-residue stretch at 678-871 (SLFLKELDIK…LAKVATRVMV (194 aa)) folds into the ATP-grasp 2 domain. 10 residues coordinate ATP: arginine 714, lysine 756, leucine 758, glutamate 763, glycine 788, isoleucine 789, histidine 790, serine 791, glutamine 830, and glutamate 842. Residues glutamine 830, glutamate 842, and asparagine 844 each coordinate Mg(2+). Glutamine 830, glutamate 842, and asparagine 844 together coordinate Mn(2+). One can recognise an MGS-like domain in the interval 952–1085 (NPIKNKGLIF…ELLALQDYLK (134 aa)). The interval 952–1085 (NPIKNKGLIF…ELLALQDYLK (134 aa)) is allosteric domain.

This sequence belongs to the CarB family. As to quaternary structure, composed of two chains; the small (or glutamine) chain promotes the hydrolysis of glutamine to ammonia, which is used by the large (or ammonia) chain to synthesize carbamoyl phosphate. Tetramer of heterodimers (alpha,beta)4. The cofactor is Mg(2+). Requires Mn(2+) as cofactor.

The enzyme catalyses hydrogencarbonate + L-glutamine + 2 ATP + H2O = carbamoyl phosphate + L-glutamate + 2 ADP + phosphate + 2 H(+). The catalysed reaction is hydrogencarbonate + NH4(+) + 2 ATP = carbamoyl phosphate + 2 ADP + phosphate + 2 H(+). Its pathway is amino-acid biosynthesis; L-arginine biosynthesis; carbamoyl phosphate from bicarbonate: step 1/1. The protein operates within pyrimidine metabolism; UMP biosynthesis via de novo pathway; (S)-dihydroorotate from bicarbonate: step 1/3. Its function is as follows. Large subunit of the glutamine-dependent carbamoyl phosphate synthetase (CPSase). CPSase catalyzes the formation of carbamoyl phosphate from the ammonia moiety of glutamine, carbonate, and phosphate donated by ATP, constituting the first step of 2 biosynthetic pathways, one leading to arginine and/or urea and the other to pyrimidine nucleotides. The large subunit (synthetase) binds the substrates ammonia (free or transferred from glutamine from the small subunit), hydrogencarbonate and ATP and carries out an ATP-coupled ligase reaction, activating hydrogencarbonate by forming carboxy phosphate which reacts with ammonia to form carbamoyl phosphate. The polypeptide is Carbamoyl phosphate synthase large chain (Helicobacter pylori (strain ATCC 700392 / 26695) (Campylobacter pylori)).